The following is a 130-amino-acid chain: RutC family protein in leuC 5'region (130 aa).

It belongs to the RutC family.

This is RutC family protein in leuC 5'region from Leuconostoc mesenteroides subsp. cremoris.